Consider the following 1668-residue polypeptide: Chitin synthase chs-2 (1668 aa).

Basic and acidic residues predominate over residues 1-19 (MMNTLDHRPLGRMETMEGK). Positions 1–51 (MMNTLDHRPLGRMETMEGKPDEDEVPTSSNSDAKGKGYYYSSGTVPTDDST) are disordered. Topologically, residues 1 to 116 (MMNTLDHRPL…HGFWHDASLQ (116 aa)) are cytoplasmic. Residues 117-137 (VLKLATFLVLFLLTLGSAVVA) form a helical membrane-spanning segment. At 138-176 (KSTFILMTSAIGWGGQTITICNQVISEATQNTVKLKNAH) the chain is on the extracellular side. Residues 177–197 (VVKWVWATLLALSAPEALCFV) form a helical membrane-spanning segment. Residues 198-212 (RSMHRTMFRNVKRPT) are Cytoplasmic-facing. Residues 213 to 233 (FIQFVFVLIIETFHSIGVGIL) form a helical membrane-spanning segment. Residues 234 to 242 (VFRIFPDLD) lie on the Extracellular side of the membrane. The helical transmembrane segment at 243–263 (AVTAAQLTNAMCFVPAILSVI) threads the bilayer. The Cytoplasmic segment spans residues 264–271 (SRKPNKSA). The chain crosses the membrane as a helical span at residues 272 to 292 (LLLVIIDFAAIAAQSSGFWAL). The Extracellular segment spans residues 293–301 (PMFLPNLQK). The helical transmembrane segment at 302–322 (HLVAIPVSLTLISLAWWQNFV) threads the bilayer. Topologically, residues 323-347 (HRDSVFPPVRTLAKFAQRLSERRSK) are cytoplasmic. Residues 348 to 368 (TYAFVSLWKICIYVVCCFLFI) traverse the membrane as a helical segment. Over 369–487 (SSRMKIEDML…IYSNYVERNQ (119 aa)) the chain is Extracellular. Residue Asn396 is glycosylated (N-linked (GlcNAc...) asparagine). A helical transmembrane segment spans residues 488 to 508 (LTMAYDALWLVIFQFGAVFVC). Over 509–522 (YHSSKFACKVMMQR) the chain is Cytoplasmic. A helical membrane pass occupies residues 523–543 (MGFALPMALSVPVTVLLLSTN). The Extracellular portion of the chain corresponds to 544–576 (CRMRQKDSCYGTNVLTVELFWQCNGASMSLADF). Residues 577-597 (ILTPQTWIWLCWLASQFWITI) form a helical membrane-spanning segment. Topologically, residues 598–1045 (HLWNPKHERL…ISIWYIIYQL (448 aa)) are cytoplasmic. The helical transmembrane segment at 1046–1066 (VMLISSILGPGTIFVMIIGAI) threads the bilayer. At 1067–1074 (SISFSIDT) the chain is on the extracellular side. A helical transmembrane segment spans residues 1075 to 1095 (LISLVIVSIPVVVFIVVCLTA). Topologically, residues 1096–1100 (KPEHQ) are cytoplasmic. Residues 1101–1121 (LICAQTIGAIFAMLMTAVVVG) form a helical membrane-spanning segment. At 1122 to 1136 (TSLQLQKDGLLSPHS) the chain is on the extracellular side. Residues 1137-1157 (MFTVAVATSFLTAAILHPLEF) form a helical membrane-spanning segment. Position 1158 (Thr1158) is a topological domain, cytoplasmic. The chain crosses the membrane as a helical span at residues 1159–1179 (CIIPGTIYFLAIPCMYMLLPI). The Extracellular portion of the chain corresponds to 1180–1375 (YSVCNMHTVS…RAGLIAIRNS (196 aa)). The disordered stretch occupies residues 1192–1216 (TREDPRPTEKNTLAKKTPGNLESGD). Positions 1280–1335 (QIDKCSEADEDEQAEIEDALEMSNQSHAAKKNQKWKQAQSEAWLADKALKRAEREY) form a coiled coil. Asn1303 is a glycosylation site (N-linked (GlcNAc...) asparagine). A helical membrane pass occupies residues 1376-1396 (HTVYFLMINIVFIISVLVLQI). Over 1397 to 1440 (HKDCLNIEWPLGPKFNHTVRPCYANHDDNQKEEVWVMTRLQLEP) the chain is Cytoplasmic. Residues 1441–1461 (IGLVFLIFFVSILVIQFLAML) traverse the membrane as a helical segment. The Extracellular segment spans residues 1462–1668 (CHRFGTLAHI…SSGDVELRRF (207 aa)). The segment at 1625–1668 (RLFTAQQDQNSPTSDGNRRKSNSRPWDQPTSSATSSGDVELRRF) is disordered. Composition is skewed to polar residues over residues 1628–1639 (TAQQDQNSPTSD) and 1647–1661 (SRPW…TSSG).

Belongs to the chitin synthase family. Class IV subfamily.

The protein localises to the cell membrane. It catalyses the reaction [(1-&gt;4)-N-acetyl-beta-D-glucosaminyl](n) + UDP-N-acetyl-alpha-D-glucosamine = [(1-&gt;4)-N-acetyl-beta-D-glucosaminyl](n+1) + UDP + H(+). In terms of biological role, may be involved in chitin synthesis in the pharynx during larval development. This is Chitin synthase chs-2 from Caenorhabditis elegans.